A 209-amino-acid polypeptide reads, in one-letter code: dITP/XTP pyrophosphatase (209 aa).

A substrate-binding site is contributed by 7-12 (SSHGYK). The Proton acceptor role is filled by aspartate 70. Aspartate 70 lines the Mg(2+) pocket. Substrate is bound by residues serine 71, 154 to 157 (FGYD), lysine 177, and 182 to 183 (HR).

The protein belongs to the HAM1 NTPase family. In terms of assembly, homodimer. It depends on Mg(2+) as a cofactor.

It catalyses the reaction XTP + H2O = XMP + diphosphate + H(+). The enzyme catalyses dITP + H2O = dIMP + diphosphate + H(+). It carries out the reaction ITP + H2O = IMP + diphosphate + H(+). Functionally, pyrophosphatase that catalyzes the hydrolysis of nucleoside triphosphates to their monophosphate derivatives, with a high preference for the non-canonical purine nucleotides XTP (xanthosine triphosphate), dITP (deoxyinosine triphosphate) and ITP. Seems to function as a house-cleaning enzyme that removes non-canonical purine nucleotides from the nucleotide pool, thus preventing their incorporation into DNA/RNA and avoiding chromosomal lesions. This Chlamydia trachomatis serovar A (strain ATCC VR-571B / DSM 19440 / HAR-13) protein is dITP/XTP pyrophosphatase.